A 274-amino-acid polypeptide reads, in one-letter code: Large ribosomal subunit protein uL2cy (274 aa).

Disordered stretches follow at residues 1–25 and 223–274; these read MAIH…VKSN and MNPV…RRSK. Over residues 7–25 the composition is skewed to polar residues; it reads KTSTPSTRNGTVDSQVKSN.

This sequence belongs to the universal ribosomal protein uL2 family. As to quaternary structure, part of the 50S ribosomal subunit.

It is found in the plastid. Its subcellular location is the chloroplast. This is Large ribosomal subunit protein uL2cy (rpl2-B) from Atropa belladonna (Belladonna).